A 158-amino-acid polypeptide reads, in one-letter code: Non-specific lipid transfer protein GPI-anchored 29 (158 aa).

The signal sequence occupies residues 1–24; the sequence is MAYFSTATSLLLLVLSVSSPYVHG. 4 disulfides stabilise this stretch: C28-C71, C38-C55, C56-C95, and C69-C105. An N-linked (GlcNAc...) asparagine glycan is attached at N84. S134 is lipidated: GPI-anchor amidated serine. Positions 135 to 158 are cleaved as a propeptide — removed in mature form; it reads KGNSLIPISGFSFVIVTALAMFRI.

The protein belongs to the plant LTP family. As to expression, confined to the ovaries of the inflorescence.

It is found in the secreted. The protein localises to the cell membrane. Functionally, probable lipid transfer protein. The chain is Non-specific lipid transfer protein GPI-anchored 29 from Arabidopsis thaliana (Mouse-ear cress).